The primary structure comprises 157 residues: MSRRHAAEKKVIPGDPVYGSVVLERFINKVMLHGKKSIARKIVYGALERFAKRLGLENPLEGFEEALENAKPVLEVRSRRVGGATYQVPVEVAPDRRSCLAMQWIIKHARSKPGKCMEVGLANELIDCFNKQGATIKKREDTHRMAEANKAFAHYKW.

Belongs to the universal ribosomal protein uS7 family. In terms of assembly, part of the 30S ribosomal subunit. Contacts proteins S9 and S11.

Its function is as follows. One of the primary rRNA binding proteins, it binds directly to 16S rRNA where it nucleates assembly of the head domain of the 30S subunit. Is located at the subunit interface close to the decoding center, probably blocks exit of the E-site tRNA. The sequence is that of Small ribosomal subunit protein uS7 from Chlamydia trachomatis serovar A (strain ATCC VR-571B / DSM 19440 / HAR-13).